The sequence spans 693 residues: Exocyst complex component 7 (693 aa).

Serine 236 is subject to Phosphoserine. Positions 236–259 are disordered; it reads SWGHEALRPRHSGRQTEPKKTTSA.

The protein belongs to the EXO70 family. The exocyst complex is composed of Sec3/Exoc1, Sec5/Exoc2, Sec6/Exoc3, Sec8/Exoc4, Sec10/Exoc5, Sec15/Exoc6, Exo70/Exoc7 and Exo84/Exoc8.

Its function is as follows. Required for exocytosis. Thought to function in intracellular vesicle targeting and docking before SNARE complex formation. The polypeptide is Exocyst complex component 7 (Drosophila melanogaster (Fruit fly)).